A 130-amino-acid polypeptide reads, in one-letter code: Transcription antitermination protein NusB (130 aa).

Belongs to the NusB family.

Its function is as follows. Involved in transcription antitermination. Required for transcription of ribosomal RNA (rRNA) genes. Binds specifically to the boxA antiterminator sequence of the ribosomal RNA (rrn) operons. This Bacillus cereus (strain B4264) protein is Transcription antitermination protein NusB.